We begin with the raw amino-acid sequence, 2325 residues long: Serine/threonine-protein kinase MEC1 (2325 aa).

In terms of domain architecture, FAT spans 1363 to 1886; it reads LLTTRSAECD…VWYIFSHARS (524 aa). The region spanning 1993–2309 is the PI3K/PI4K catalytic domain; sequence FDDNVNIFFS…QVDVLIQEAT (317 aa). Residues 1999-2005 form a G-loop region; sequence IFFSLQM. The tract at residues 2174-2182 is catalytic loop; the sequence is GLGDRHCEN. An activation loop region spans residues 2194–2218; sequence HIDFDCLFEKGTTLPTPEIVPFRLT. The region spanning 2293–2325 is the FATC domain; the sequence is LPMNIHGQVDVLIQEATSLERLSQMYAGWAAYM.

This sequence belongs to the PI3/PI4-kinase family. ATM subfamily.

The protein localises to the nucleus. It carries out the reaction L-seryl-[protein] + ATP = O-phospho-L-seryl-[protein] + ADP + H(+). It catalyses the reaction L-threonyl-[protein] + ATP = O-phospho-L-threonyl-[protein] + ADP + H(+). Functionally, serine/threonine protein kinase which activates checkpoint signaling upon genotoxic stresses such as ionizing radiation (IR), ultraviolet light (UV), or DNA replication stalling, thereby acting as a DNA damage sensor. Recognizes the substrate consensus sequence [ST]-Q. Recruited to DNA lesions in order to initiate the DNA repair by homologous recombination. Phosphorylates histone H2A to form H2AS128ph (gamma-H2A) at sites of DNA damage, also involved in the regulation of DNA damage response mechanism. Required for cell growth and meiotic recombination. This Candida albicans (strain SC5314 / ATCC MYA-2876) (Yeast) protein is Serine/threonine-protein kinase MEC1 (MEC1).